We begin with the raw amino-acid sequence, 263 residues long: Protein YpjB (263 aa).

The segment covering 233-244 (DFDDSSSEDDPV) has biased composition (acidic residues). The interval 233 to 263 (DFDDSSSEDDPVENSPVVTSPVVSSSKSSFQ) is disordered. Positions 245–263 (ENSPVVTSPVVSSSKSSFQ) are enriched in low complexity.

The chain is Protein YpjB (ypjB) from Escherichia coli (strain K12).